The primary structure comprises 128 residues: L-ectoine synthase (128 aa).

Belongs to the ectoine synthase family.

The catalysed reaction is (2S)-4-acetamido-2-aminobutanoate = L-ectoine + H2O. Its pathway is amine and polyamine biosynthesis; ectoine biosynthesis; L-ectoine from L-aspartate 4-semialdehyde: step 3/3. In terms of biological role, catalyzes the circularization of gamma-N-acetyl-alpha,gamma-diaminobutyric acid (ADABA) to ectoine (1,4,5,6-tetrahydro-2-methyl-4-pyrimidine carboxylic acid), which is an excellent osmoprotectant. The sequence is that of L-ectoine synthase from Aliivibrio fischeri (strain MJ11) (Vibrio fischeri).